Consider the following 608-residue polypeptide: Glutamine--fructose-6-phosphate aminotransferase [isomerizing] (608 aa).

Catalysis depends on Cys2, which acts as the Nucleophile; for GATase activity. In terms of domain architecture, Glutamine amidotransferase type-2 spans Cys2–Ala217. SIS domains are found at residues Leu284–Lys423 and Leu456–Pro598. Lys603 functions as the For Fru-6P isomerization activity in the catalytic mechanism.

Its subcellular location is the cytoplasm. It catalyses the reaction D-fructose 6-phosphate + L-glutamine = D-glucosamine 6-phosphate + L-glutamate. In terms of biological role, involved in the production of the root hair deformation (HAD) factor specifically on soybean. This is Glutamine--fructose-6-phosphate aminotransferase [isomerizing] (nodM) from Bradyrhizobium diazoefficiens (strain JCM 10833 / BCRC 13528 / IAM 13628 / NBRC 14792 / USDA 110).